The chain runs to 464 residues: Citrate synthase, mitochondrial (464 aa).

A mitochondrion-targeting transit peptide spans 1–27; the sequence is MALLTAATRLLGAKNSSCLVLAARHAS. The SIFI-degron motif lies at 2-21; that stretch reads ALLTAATRLLGAKNSSCLVL. Lys-57 carries the N6-succinyllysine modification. Position 76 is an N6-acetyllysine; alternate (Lys-76). Lys-76 carries the post-translational modification N6-succinyllysine; alternate. Lys-103 and Lys-193 each carry N6-succinyllysine. The residue at position 226 (Ser-226) is a Phosphoserine. Residue His-301 is part of the active site. 2 positions are modified to N6-acetyllysine; alternate: Lys-321 and Lys-327. 2 positions are modified to N6-succinyllysine; alternate: Lys-321 and Lys-327. Residue His-347 is part of the active site. Arg-356 is an oxaloacetate binding site. Lys-375 carries the N6-acetyllysine; alternate modification. Lys-375 is subject to N6-succinyllysine; alternate. An N6-acetyllysine modification is found at Lys-382. Lys-393 bears the N6-acetyllysine; alternate mark. Lys-393 carries the post-translational modification N6-succinyllysine; alternate. Lys-395 carries the post-translational modification N6,N6,N6-trimethyllysine. Asp-402 is a catalytic residue. Oxaloacetate-binding residues include Arg-428 and Arg-448. Lys-450 carries the N6-succinyllysine modification. Lys-459 is modified (N6-acetyllysine; alternate). At Lys-459 the chain carries N6-succinyllysine; alternate.

It belongs to the citrate synthase family. Homodimer. Post-translationally, methylated. Trimethylation at Lys-395 by CSKMT decreases citrate synthase activity. In terms of processing, in response to mitochondrial stress, the precursor protein is ubiquitinated by the SIFI complex in the cytoplasm before mitochondrial import, leading to its degradation. Within the SIFI complex, UBR4 initiates ubiquitin chain that are further elongated or branched by KCMF1.

The protein localises to the mitochondrion matrix. It carries out the reaction oxaloacetate + acetyl-CoA + H2O = citrate + CoA + H(+). The protein operates within carbohydrate metabolism; tricarboxylic acid cycle; isocitrate from oxaloacetate: step 1/2. Functionally, key enzyme of the Krebs tricarboxylic acid cycle which catalyzes the synthesis of citrate from acetyl coenzyme A and oxaloacetate. This Mus musculus (Mouse) protein is Citrate synthase, mitochondrial (Cs).